Reading from the N-terminus, the 98-residue chain is ESAT-6-like protein EsxM (98 aa).

It belongs to the WXG100 family. CFP-10 subfamily.

The protein localises to the secreted. The protein is ESAT-6-like protein EsxM (esxM) of Mycobacterium bovis (strain ATCC BAA-935 / AF2122/97).